A 361-amino-acid chain; its full sequence is sn-glycerol-3-phosphate import ATP-binding protein UgpC (361 aa).

In terms of domain architecture, ABC transporter spans 4–235 (LSLKGIRKSY…PETVFVAGFI (232 aa)). 37 to 44 (GPSGCGKS) serves as a coordination point for ATP.

Belongs to the ABC transporter superfamily. sn-glycerol-3-phosphate importer (TC 3.A.1.1.3) family. As to quaternary structure, the complex is composed of two ATP-binding proteins (UgpC), two transmembrane proteins (UgpA and UgpE) and a solute-binding protein (UgpB).

It localises to the cell inner membrane. The enzyme catalyses sn-glycerol 3-phosphate(out) + ATP + H2O = sn-glycerol 3-phosphate(in) + ADP + phosphate + H(+). In terms of biological role, part of the ABC transporter complex UgpBAEC involved in sn-glycerol-3-phosphate (G3P) import. Responsible for energy coupling to the transport system. This is sn-glycerol-3-phosphate import ATP-binding protein UgpC from Burkholderia ambifaria (strain ATCC BAA-244 / DSM 16087 / CCUG 44356 / LMG 19182 / AMMD) (Burkholderia cepacia (strain AMMD)).